The following is a 254-amino-acid chain: Zinc import ATP-binding protein ZnuC (254 aa).

The ABC transporter domain maps to 5–219; it reads VELKEVCLSF…PEFARLFGRP (215 aa). ATP is bound at residue 37-44; that stretch reads GPNGAGKS. A compositionally biased stretch (basic and acidic residues) spans 233–242; that stretch reads CDGEHHHHEP. Residues 233 to 254 form a disordered region; sequence CDGEHHHHEPQVPVIRLPSRNQ.

The protein belongs to the ABC transporter superfamily. Zinc importer (TC 3.A.1.15.5) family. The complex is composed of two ATP-binding proteins (ZnuC), two transmembrane proteins (ZnuB) and a solute-binding protein (ZnuA).

It localises to the cell inner membrane. The enzyme catalyses Zn(2+)(out) + ATP(in) + H2O(in) = Zn(2+)(in) + ADP(in) + phosphate(in) + H(+)(in). Functionally, part of the ABC transporter complex ZnuABC involved in zinc import. Responsible for energy coupling to the transport system. The chain is Zinc import ATP-binding protein ZnuC from Aeromonas hydrophila subsp. hydrophila (strain ATCC 7966 / DSM 30187 / BCRC 13018 / CCUG 14551 / JCM 1027 / KCTC 2358 / NCIMB 9240 / NCTC 8049).